The primary structure comprises 257 residues: UPF0246 protein YaaA (257 aa).

The protein belongs to the UPF0246 family.

The chain is UPF0246 protein YaaA from Salmonella agona (strain SL483).